The sequence spans 465 residues: Cysteine--tRNA ligase (465 aa).

Zn(2+) is bound at residue C29. Positions 31 to 41 match the 'HIGH' region motif; sequence PTVYNYIHIGN. Residues C209, H234, and E238 each coordinate Zn(2+). Residues 266–270 carry the 'KMSKS' region motif; it reads KMSKS. K269 provides a ligand contact to ATP. Residue S270 is modified to Phosphoserine.

Belongs to the class-I aminoacyl-tRNA synthetase family. Monomer. It depends on Zn(2+) as a cofactor.

The protein resides in the cytoplasm. It carries out the reaction tRNA(Cys) + L-cysteine + ATP = L-cysteinyl-tRNA(Cys) + AMP + diphosphate. In Bacillus cereus (strain G9842), this protein is Cysteine--tRNA ligase.